A 122-amino-acid polypeptide reads, in one-letter code: Photosystem II extrinsic protein U (122 aa).

The N-terminal stretch at 1–26 is a signal peptide; sequence MKTIVRLFAILMVLISSVGFVGSAVA.

It belongs to the PsbU family. PSII is composed of 1 copy each of membrane proteins PsbA, PsbB, PsbC, PsbD, PsbE, PsbF, PsbH, PsbI, PsbJ, PsbK, PsbL, PsbM, PsbT, PsbX, PsbY, PsbZ, Psb30/Ycf12, peripheral proteins PsbO, CyanoQ (PsbQ), PsbU, PsbV and a large number of cofactors. It forms dimeric complexes.

The protein localises to the cellular thylakoid membrane. One of the extrinsic, lumenal subunits of photosystem II (PSII). PSII is a light-driven water plastoquinone oxidoreductase, using light energy to abstract electrons from H(2)O, generating a proton gradient subsequently used for ATP formation. The extrinsic proteins stabilize the structure of photosystem II oxygen-evolving complex (OEC), the ion environment of oxygen evolution and protect the OEC against heat-induced inactivation. The polypeptide is Photosystem II extrinsic protein U (Crocosphaera subtropica (strain ATCC 51142 / BH68) (Cyanothece sp. (strain ATCC 51142))).